Here is a 650-residue protein sequence, read N- to C-terminus: Acetyl-coenzyme A synthetase (650 aa).

CoA-binding positions include 191–194, T311, and N335; that span reads RAGR. ATP is bound by residues 387 to 389, 411 to 416, D500, and R515; these read GEP and DTWWQT. Residue S523 coordinates CoA. Residue R526 coordinates ATP. Residues V537, H539, and V542 each coordinate Mg(2+). R584 serves as a coordination point for CoA. The residue at position 609 (K609) is an N6-acetyllysine.

The protein belongs to the ATP-dependent AMP-binding enzyme family. It depends on Mg(2+) as a cofactor. In terms of processing, acetylated. Deacetylation by the SIR2-homolog deacetylase activates the enzyme.

The enzyme catalyses acetate + ATP + CoA = acetyl-CoA + AMP + diphosphate. Its function is as follows. Catalyzes the conversion of acetate into acetyl-CoA (AcCoA), an essential intermediate at the junction of anabolic and catabolic pathways. AcsA undergoes a two-step reaction. In the first half reaction, AcsA combines acetate with ATP to form acetyl-adenylate (AcAMP) intermediate. In the second half reaction, it can then transfer the acetyl group from AcAMP to the sulfhydryl group of CoA, forming the product AcCoA. This Shewanella pealeana (strain ATCC 700345 / ANG-SQ1) protein is Acetyl-coenzyme A synthetase.